A 343-amino-acid polypeptide reads, in one-letter code: Protein RecA (343 aa).

Position 64 to 71 (glycine 64 to threonine 71) interacts with ATP.

This sequence belongs to the RecA family.

The protein resides in the cytoplasm. Functionally, can catalyze the hydrolysis of ATP in the presence of single-stranded DNA, the ATP-dependent uptake of single-stranded DNA by duplex DNA, and the ATP-dependent hybridization of homologous single-stranded DNAs. It interacts with LexA causing its activation and leading to its autocatalytic cleavage. The protein is Protein RecA of Acidiphilium cryptum (strain JF-5).